A 285-amino-acid chain; its full sequence is tRNA-cytidine(32) 2-sulfurtransferase (285 aa).

The PP-loop motif signature appears at 49-54; that stretch reads SGGKDS. Residues C124, C127, and C215 each coordinate [4Fe-4S] cluster.

Belongs to the TtcA family. As to quaternary structure, homodimer. Mg(2+) is required as a cofactor. Requires [4Fe-4S] cluster as cofactor.

It is found in the cytoplasm. It catalyses the reaction cytidine(32) in tRNA + S-sulfanyl-L-cysteinyl-[cysteine desulfurase] + AH2 + ATP = 2-thiocytidine(32) in tRNA + L-cysteinyl-[cysteine desulfurase] + A + AMP + diphosphate + H(+). Its pathway is tRNA modification. Catalyzes the ATP-dependent 2-thiolation of cytidine in position 32 of tRNA, to form 2-thiocytidine (s(2)C32). The sulfur atoms are provided by the cysteine/cysteine desulfurase (IscS) system. The chain is tRNA-cytidine(32) 2-sulfurtransferase from Hahella chejuensis (strain KCTC 2396).